Reading from the N-terminus, the 355-residue chain is MEPCEDKCKRGLSLNFFEEDGPSLRLNSDSLDFLARDFKVEGMSQDNFDQKTKLYITEESLQKEVNIFLTKIYIRESEREPPQSHNSVFQLLSKIRNSVPNVSAFRNNLSILSKELSFFSFARHIHNRRLCWAEFIYCIRRGIKAIFKTTVQFLPTRLAKIFEKKASEVLKDNLLQTCNSKREGEVCDVKEPAVASSESSDCFNDMQELNNIVDLRDYSNSRFQQNRLLDRNLKGWIQGESEKALKGRRTTKRNDKENYNYPDFSNDNELLFSLATLIVENNPKKENIIPKYYLRYLQRLSRTEINKEIIEIEKLELEVVQFQMSIANLINTQVEVTNTIEELGLRCRPLPNENE.

Residues 298–338 (QRLSRTEINKEIIEIEKLELEVVQFQMSIANLINTQVEVTN) adopt a coiled-coil conformation.

It is found in the cytoplasm. Functionally, has a role in meiosis. The protein is Meiotic coiled-coil protein 4 (mcp4) of Schizosaccharomyces pombe (strain 972 / ATCC 24843) (Fission yeast).